The sequence spans 366 residues: Chorismate synthase (366 aa).

NADP(+) is bound by residues Arg48 and Arg54. Residues 132 to 134 (RSS), 244 to 245 (NA), Gly289, 304 to 308 (KPTSS), and Arg330 each bind FMN.

This sequence belongs to the chorismate synthase family. In terms of assembly, homotetramer. The cofactor is FMNH2.

The catalysed reaction is 5-O-(1-carboxyvinyl)-3-phosphoshikimate = chorismate + phosphate. It functions in the pathway metabolic intermediate biosynthesis; chorismate biosynthesis; chorismate from D-erythrose 4-phosphate and phosphoenolpyruvate: step 7/7. Its function is as follows. Catalyzes the anti-1,4-elimination of the C-3 phosphate and the C-6 proR hydrogen from 5-enolpyruvylshikimate-3-phosphate (EPSP) to yield chorismate, which is the branch point compound that serves as the starting substrate for the three terminal pathways of aromatic amino acid biosynthesis. This reaction introduces a second double bond into the aromatic ring system. In Methylobacterium radiotolerans (strain ATCC 27329 / DSM 1819 / JCM 2831 / NBRC 15690 / NCIMB 10815 / 0-1), this protein is Chorismate synthase.